Here is a 658-residue protein sequence, read N- to C-terminus: Interferon-induced GTP-binding protein Mx1 (658 aa).

At methionine 1 the chain carries N-acetylmethionine. Residues methionine 1 to leucine 20 form a disordered region. The Dynamin-type G domain occupies aspartate 65–proline 338. The tract at residues glycine 75–serine 82 is G1 motif. Glycine 75–serine 82 is a binding site for GTP. The interval valine 100 to arginine 102 is G2 motif. The interval aspartate 176 to glycine 179 is G3 motif. GTP is bound by residues aspartate 176–isoleucine 180 and threonine 245–aspartate 248. The G4 motif stretch occupies residues threonine 245 to aspartate 248. The interval lysine 277–glycine 280 is G5 motif. Residues leucine 339–glutamate 364 are bundle signaling element (BSE). Residues glutamate 364–cysteine 531 form a middle domain region. Positions glutamate 365–glutamate 628 are stalk. A critical for lipid-binding region spans residues lysine 551–lysine 554. Residues leucine 570–glycine 658 form the GED domain.

This sequence belongs to the TRAFAC class dynamin-like GTPase superfamily. Dynamin/Fzo/YdjA family. Homooligomer. Oligomerizes into multimeric filamentous or ring-like structures by virtue of its stalk domain. Oligomerization is critical for GTPase activity, protein stability, and recognition of viral target structures. Interacts with TRPC1, TRPC3, TRPC4, TRPC5, TRPC6 and TRPC7. Interacts with HSPA5. Interacts with TUBB/TUBB5. Interacts with DDX39A and DDX39B. In terms of processing, ISGylated.

It is found in the cytoplasm. Its subcellular location is the endoplasmic reticulum membrane. It localises to the perinuclear region. Interferon-induced dynamin-like GTPase with antiviral activity. The protein is Interferon-induced GTP-binding protein Mx1 (MX1) of Eumetopias jubatus (Steller sea lion).